A 475-amino-acid polypeptide reads, in one-letter code: MAELRTQPALGRIRQVHMVGIGGIGMSSIAEVLLNRGYDVTGSDLERSDVTERLEAEGATIHEGHAAEQVGTADVVVYSSAVDPDENPETREAERRRISLIPRAEMLGELIRMKFGVGVAGTHGKTTTTSMAGLVVAEGGFDPTVIVGGKVTAFGSNAITGEGDVLVIEADEYDRTFLRLTPSLAVITSIEEDHLDVYEDLAAIQASFTQYANSVPFFGAAILCLDDPNVQAIVGDVERRVVTYGTTRQAEVRGENVRREGMTTRFDVVVRGERLGTIELHVPGMHNVRNALAAVAVGQELEISFERVRDGLGTFTGVRRRFEKKGEVGGITVLDDYAHHPTEIEATLDAAHQGFPDRRVVAVFQPHMYSRTQNFMDEFACSFFNADMLVLTDVYGAREAPIEGVTGGRLAERAEQFGHRAVHYVPEKTDLPGRLQELVGPGDVVLMLGAGDIWRASEAFVELLENDGGTAIERD.

121-127 (GTHGKTT) serves as a coordination point for ATP.

The protein belongs to the MurCDEF family.

It localises to the cytoplasm. It catalyses the reaction UDP-N-acetyl-alpha-D-muramate + L-alanine + ATP = UDP-N-acetyl-alpha-D-muramoyl-L-alanine + ADP + phosphate + H(+). The protein operates within cell wall biogenesis; peptidoglycan biosynthesis. Its function is as follows. Cell wall formation. The sequence is that of UDP-N-acetylmuramate--L-alanine ligase from Salinibacter ruber (strain DSM 13855 / M31).